The following is a 524-amino-acid chain: Chromosomal replication initiator protein DnaA (524 aa).

The interval 1–85 is domain I, interacts with DnaA modulators; the sequence is MSQNSSSLLE…TRVLSLRMGR (85 aa). Residues 85–182 form a domain II region; the sequence is RSFSLAVSVE…TPAHNPNREV (98 aa). The segment at 95–183 is disordered; that stretch reads PEQEIPETPA…PAHNPNREVS (89 aa). The segment covering 148 to 158 has biased composition (pro residues); the sequence is APEPHPAPIAD. The tract at residues 183–399 is domain III, AAA+ region; sequence SLNPKYTFES…GALIRVSAYS (217 aa). Residues glycine 227, glycine 229, lysine 230, and threonine 231 each contribute to the ATP site. A domain IV, binds dsDNA region spans residues 400-524; sequence SLINQPIDKE…TQLIKSRGRN (125 aa).

The protein belongs to the DnaA family. In terms of assembly, oligomerizes as a right-handed, spiral filament on DNA at oriC.

It localises to the cytoplasm. Its function is as follows. Plays an essential role in the initiation and regulation of chromosomal replication. ATP-DnaA binds to the origin of replication (oriC) to initiate formation of the DNA replication initiation complex once per cell cycle. Binds the DnaA box (a 9 base pair repeat at the origin) and separates the double-stranded (ds)DNA. Forms a right-handed helical filament on oriC DNA; dsDNA binds to the exterior of the filament while single-stranded (ss)DNA is stabiized in the filament's interior. The ATP-DnaA-oriC complex binds and stabilizes one strand of the AT-rich DNA unwinding element (DUE), permitting loading of DNA polymerase. After initiation quickly degrades to an ADP-DnaA complex that is not apt for DNA replication. Binds acidic phospholipids. The protein is Chromosomal replication initiator protein DnaA of Corynebacterium glutamicum (strain ATCC 13032 / DSM 20300 / JCM 1318 / BCRC 11384 / CCUG 27702 / LMG 3730 / NBRC 12168 / NCIMB 10025 / NRRL B-2784 / 534).